Here is a 174-residue protein sequence, read N- to C-terminus: Glyoxylase I 4 (174 aa).

The region spanning 13–135 (SLNHVSVLCR…DGFMIEICNC (123 aa)) is the VOC domain. Residue Glu-131 is the Proton donor/acceptor of the active site.

This sequence belongs to the glyoxalase I family. In terms of tissue distribution, mostly expressed in roots, and, to a lower extent, in leaves, flowers, seeds and siliques.

It is found in the cell membrane. The protein resides in the cytoplasm. Involved in the detoxification and scavenging of methylglyoxal (MG), a cytotoxic aldehyde produced in response to primary metabolism alteration observed during biotic and abiotic stresses. Modulates cross-talk between salicylic acid (SA) and jasmonic acid (JA) signaling pathways during defense responses to pathogens such as Botrytis cinerea. This Arabidopsis thaliana (Mouse-ear cress) protein is Glyoxylase I 4.